Here is a 507-residue protein sequence, read N- to C-terminus: Nucleoporin p54 (507 aa).

A run of 9 repeats spans residues 5 to 6 (FG), 25 to 26 (FG), 28 to 29 (FG), 53 to 54 (FG), 61 to 62 (FG), 63 to 64 (FG), 67 to 68 (FG), 87 to 88 (FG), and 444 to 445 (FG). The 9 X 2 AA repeats of F-G stretch occupies residues 5–445 (FGAPSGTSGT…SQIRMQNHFG (441 aa)).

It belongs to the NUP54 family. In terms of assembly, component of the p62 complex, a complex composed of NUP62, NUP54, and the isoform p58 and isoform p45 of NUP58. Interacts with NUTF2. O-glycosylated.

It localises to the nucleus. It is found in the nuclear pore complex. Its subcellular location is the nucleus membrane. Component of the nuclear pore complex, a complex required for the trafficking across the nuclear membrane. In Homo sapiens (Human), this protein is Nucleoporin p54 (NUP54).